Consider the following 117-residue polypeptide: UPF0295 protein RBAM_008830 (117 aa).

Transmembrane regions (helical) follow at residues 13 to 33 (TFAL…LFFK) and 41 to 61 (LFMI…FWIG).

Belongs to the UPF0295 family.

It is found in the cell membrane. This is UPF0295 protein RBAM_008830 from Bacillus velezensis (strain DSM 23117 / BGSC 10A6 / LMG 26770 / FZB42) (Bacillus amyloliquefaciens subsp. plantarum).